A 355-amino-acid polypeptide reads, in one-letter code: Uroporphyrinogen decarboxylase (355 aa).

Residues 36–40, D85, Y160, S215, and H334 each bind substrate; that span reads RQAGR.

This sequence belongs to the uroporphyrinogen decarboxylase family. As to quaternary structure, homodimer.

The protein resides in the cytoplasm. It catalyses the reaction uroporphyrinogen III + 4 H(+) = coproporphyrinogen III + 4 CO2. It participates in porphyrin-containing compound metabolism; protoporphyrin-IX biosynthesis; coproporphyrinogen-III from 5-aminolevulinate: step 4/4. Catalyzes the decarboxylation of four acetate groups of uroporphyrinogen-III to yield coproporphyrinogen-III. This Rhodococcus jostii (strain RHA1) protein is Uroporphyrinogen decarboxylase.